The sequence spans 432 residues: MRNPIIDVGAKELSYEIREIVDVAKKIEEFGINITWENIGDPVAKGEKIPDWIKDIIAEIVKNDCSYAYCPTKGLLETREFLAEQVNKRGGVQITAEDIIFFNGLGDAIAKIYGLLKRQVRVINPSPSYSTHSSAEASHAGSPPVTYFLDPYNYWYPDIDDLEKRIKYNPAVSGILVINPDNPTGAVYPKKILNEIVDLANEYDLFIICDEIYCNLVYNGKKQHLLCEVIDDVCGLSLKGISKELPWPGARCGWIEIYNADKDEEFKKYVESIYKAKLIEVCSTTLPQMAIPRIMGHRNYKKYLEERNRFFEKRSNTAYKKLKDLDGVIANKANGAFYMSVVFEDNYLNGNNSIKIENEKLKEFIEHQIKDASIDKKFVYYLLASTGICVVPLTSFCSQLNGFRVTLLERDDEKFEWIFDTLAEKIDEFLKT.

At Lys243 the chain carries N6-(pyridoxal phosphate)lysine.

The protein belongs to the class-II pyridoxal-phosphate-dependent aminotransferase family. Pyridoxal 5'-phosphate is required as a cofactor.

The protein localises to the cytoplasm. This is an uncharacterized protein from Methanocaldococcus jannaschii (strain ATCC 43067 / DSM 2661 / JAL-1 / JCM 10045 / NBRC 100440) (Methanococcus jannaschii).